A 516-amino-acid chain; its full sequence is Cyclic AMP response element-binding protein A (516 aa).

Phosphoserine occurs at positions 75, 79, and 82. Disordered stretches follow at residues 213–237 (KDEPMSPDSSCPASPTSQASSSQHQ), 294–338 (KSEK…HLFA), and 353–408 (PAGG…KGST). Positions 221 to 237 (SSCPASPTSQASSSQHQ) are enriched in low complexity. Over residues 361 to 392 (RVSRTAASITRSSSGSASASGSSTSSTVTTTR) the composition is skewed to low complexity. A bZIP domain is found at 441-504 (SLKKIRRKIK…ANLLSQLHKL (64 aa)). A basic motif region spans residues 443–463 (KKIRRKIKNKISAQESRRKKK). Residues 469 to 476 (LERRVEIL) form a leucine-zipper region.

This sequence belongs to the bZIP family. As to quaternary structure, may bind DNA as heterodimers with other bZIP proteins. In terms of tissue distribution, in all cell types examined, including developing salivary gland in embryos and in adults, brain and optic lobe cell bodies, salivary gland, midgut epithelial cells of the cardia, female ovarian columnar follicle cells and male seminal vesicle, ejaculatory duct, and ejaculatory bulb.

The protein resides in the nucleus. Its function is as follows. Transcriptional activator. Binds to fat body-specific enhancers of alcohol dehydrogenase (ADH) and yolk protein genes. BBF-2 may play a role in fat body gene expression. It binds the consensus sequence 5'-T[AC]NACGTAN[TG]C-3'. The sequence is that of Cyclic AMP response element-binding protein A (CrebA) from Drosophila melanogaster (Fruit fly).